The sequence spans 432 residues: D-amino acid dehydrogenase (432 aa).

3–17 contacts FAD; it reads VLVLGGGVIGVTSAY.

Belongs to the DadA oxidoreductase family. Requires FAD as cofactor.

The enzyme catalyses a D-alpha-amino acid + A + H2O = a 2-oxocarboxylate + AH2 + NH4(+). Its pathway is amino-acid degradation; D-alanine degradation; NH(3) and pyruvate from D-alanine: step 1/1. Functionally, oxidative deamination of D-amino acids. This chain is D-amino acid dehydrogenase, found in Delftia acidovorans (strain DSM 14801 / SPH-1).